Here is a 206-residue protein sequence, read N- to C-terminus: Sclerostin domain-containing protein 1 (206 aa).

A signal peptide spans 1–23 (MLPPAIHLSLIPLLCILMKNCLA). The segment at 42-62 (AHPSSNSTLNQARNGGRHFSS) is disordered. Polar residues predominate over residues 43–62 (HPSSNSTLNQARNGGRHFSS). Asn-47 carries an N-linked (GlcNAc...) asparagine glycan. Disulfide bonds link Cys-75-Cys-133, Cys-89-Cys-147, Cys-100-Cys-163, and Cys-104-Cys-165. A CTCK domain is found at 75–170 (CRELRSTKYI…TACKCKRYTR (96 aa)). Asn-173 is a glycosylation site (N-linked (GlcNAc...) asparagine). A disordered region spans residues 176-206 (SHNFESVSPAKPAQHHRERKRASKSSKHSLS). Residues 188–206 (AQHHRERKRASKSSKHSLS) are compositionally biased toward basic residues.

The protein belongs to the sclerostin family. As to quaternary structure, interacts with BMP2, BMP4, BMP6 and BMP7 with high affinity. Highly expressed within the maximally sensitized/receptive endometrium. Weakly expressed in brain, kidney and the female reproductive tract. Expressed in the dermal papilla (DP) and at high level in the precortex of both anagen vibrissae and pelage follicles. Dynymic expression during the hair cycle.

It is found in the secreted. In terms of biological role, directly antagonizes activity of BMP2, BMP4, BMP6 and BMP7 in a dose-dependent manner. May be involved in the onset of endometrial receptivity for implantation/sensitization for the decidual cell reaction. Enhances Wnt signaling and inhibits TGF-beta signaling. The polypeptide is Sclerostin domain-containing protein 1 (Sostdc1) (Rattus norvegicus (Rat)).